The following is a 450-amino-acid chain: Chromosomal replication initiator protein DnaA (450 aa).

The segment at 1 to 76 is domain I, interacts with DnaA modulators; sequence MNLNDILKEL…KKILKQPVNI (76 aa). Residues 76–107 are domain II; it reads ISFTYEQEYQKQLEKTESINKDHSDIISKKNK. The tract at residues 108–327 is domain III, AAA+ region; it reads KVNENTFENF…GSVSRLNFWS (220 aa). 4 residues coordinate ATP: Gly151, Gly153, Lys154, and Thr155. Residues 328-450 form a domain IV, binds dsDNA region; it reads QQNPEEKVIT…DILKNKILTK (123 aa).

Belongs to the DnaA family. In terms of assembly, oligomerizes as a right-handed, spiral filament on DNA at oriC.

The protein localises to the cytoplasm. Its subcellular location is the cell membrane. In terms of biological role, plays an essential role in the initiation and regulation of chromosomal replication. ATP-DnaA binds to the origin of replication (oriC) to initiate formation of the DNA replication initiation complex once per cell cycle. Binds the DnaA box (a 9 base pair repeat at the origin) and separates the double-stranded (ds)DNA. Forms a right-handed helical filament on oriC DNA; dsDNA binds to the exterior of the filament while single-stranded (ss)DNA is stabiized in the filament's interior. The ATP-DnaA-oriC complex binds and stabilizes one strand of the AT-rich DNA unwinding element (DUE), permitting loading of DNA polymerase. After initiation quickly degrades to an ADP-DnaA complex that is not apt for DNA replication. Binds acidic phospholipids. This is Chromosomal replication initiator protein DnaA from Mycoplasma capricolum subsp. capricolum (strain California kid / ATCC 27343 / NCTC 10154).